The following is a 351-amino-acid chain: Fe(3+) ions import ATP-binding protein FbpC (351 aa).

One can recognise an ABC transporter domain in the interval 7 to 237 (VVLKNVCKRF…PSSMFMANFM (231 aa)). 39 to 46 (GPSGCGKT) contributes to the ATP binding site.

The protein belongs to the ABC transporter superfamily. Fe(3+) ion importer (TC 3.A.1.10) family. As to quaternary structure, the complex is composed of two ATP-binding proteins (FbpC), two transmembrane proteins (FbpB) and a solute-binding protein (FbpA).

The protein localises to the cell inner membrane. It catalyses the reaction Fe(3+)(out) + ATP + H2O = Fe(3+)(in) + ADP + phosphate + H(+). In terms of biological role, part of the ABC transporter complex FbpABC involved in Fe(3+) ions import. Responsible for energy coupling to the transport system. In Photobacterium profundum (strain SS9), this protein is Fe(3+) ions import ATP-binding protein FbpC.